The chain runs to 361 residues: MEGGSDKESKVFCDSPSPNPKGEMSVPSNVRGKKKLPKELKLPKEVFEKPAPAPTPPRDLDSKAYVTIGEKNFVVKADDLEQIGELGRGAYGVVDKMRHVPSGVIMAVKRIRATVNTQEQKRLLMDLDISMRTVDCFYTVTFYGALFREGDVWICMELMDTSLDKFYKQVHEKGKTIPEDILGKITVSIVKALEHLHSNLSVIHRDVKPSNVLINMQGQVKMCDFGISGYLVDSVAKTMDAGCKPYMAPERINPETNQKGYNVKSDIWSLGITMIELAILRFPYDSWGTPFQQLKQVVEEPSPQLPADRFSADFVDFTSQCLRKNSTERPTYTELMQHPFFTLHDSKDTDVASFVKTILGD.

Composition is skewed to basic and acidic residues over residues 1-11 (MEGGSDKESKV) and 37-48 (PKELKLPKEVFE). Residues 1–61 (MEGGSDKESK…PAPTPPRDLD (61 aa)) form a disordered region. The segment at 30–46 (VRGKKKLPKELKLPKEV) is d domain. One can recognise a Protein kinase domain in the interval 80 to 341 (LEQIGELGRG…YTELMQHPFF (262 aa)). ATP-binding positions include 86–94 (LGRGAYGVV) and Lys109. The active-site Proton acceptor is Asp206. Ser234 is subject to Phosphoserine; by MAPK3. Residue Thr238 is modified to Phosphothreonine; by MAPK3. The segment at 338 to 361 (HPFFTLHDSKDTDVASFVKTILGD) is DVD domain.

This sequence belongs to the protein kinase superfamily. STE Ser/Thr protein kinase family. MAP kinase kinase subfamily. Dimer. Interacts (via its D domain) with its MAP kinase substrates. Interacts (via its DVD domain) with MAP3Ks activators. Weakly autophosphorylated. Phosphorylated at Ser-234 and Thr-238 by the majority of M3Ks.

Its subcellular location is the nucleus. It is found in the cytoplasm. The protein localises to the cytoskeleton. The enzyme catalyses L-seryl-[protein] + ATP = O-phospho-L-seryl-[protein] + ADP + H(+). It carries out the reaction L-threonyl-[protein] + ATP = O-phospho-L-threonyl-[protein] + ADP + H(+). The catalysed reaction is L-tyrosyl-[protein] + ATP = O-phospho-L-tyrosyl-[protein] + ADP + H(+). Its activity is regulated as follows. Activated by dual phosphorylation on Ser-234 and Thr-238 in response to a variety of cellular stresses, including UV radiation, osmotic shock, hypoxia, inflammatory cytokines, interferon gamma (IFNG), and less often by growth factors. MAP2K6/MKK6 is activated by the majority of M3Ks. In terms of biological role, dual specificity protein kinase which acts as an essential component of the MAP kinase signal transduction pathway. Catalyzes the concomitant phosphorylation of a threonine and a tyrosine residue in the MAP kinases p38 and plays an important role in the regulation of cellular responses to cytokines and all kinds of stresses. The p38 MAP kinase signal transduction pathway leads to direct activation of transcription factors. Phosphorylation by MAP2K6 asymmetrically activates p38 on one side of the blastodisc, an event which is necessary for blastomere cleavage. The polypeptide is Dual specificity mitogen-activated protein kinase kinase 6 (Danio rerio (Zebrafish)).